The sequence spans 590 residues: Leucine-rich repeat transmembrane neuronal protein 4 (590 aa).

A signal peptide spans 1–30 (MGFRLITQLKGMSVFLVLFPTLLLVMLTGA). An LRRNT domain is found at 31 to 61 (QRACPKNCRCDGKIVYCESHAFADIPENISG). At 31–424 (QRACPKNCRC…HEYEHVSFHK (394 aa)) the chain is on the extracellular side. N58 is a glycosylation site (N-linked (GlcNAc...) asparagine). LRR repeat units lie at residues 62 to 83 (GSQG…QFAG), 86 to 107 (QLIW…AFQG), 110 to 131 (RLKE…TFHP), 134 to 155 (NLRN…QFKG), 158 to 179 (KLII…VFQD), 182 to 203 (NLDF…AFAG), 206 to 226 (KLKE…AHFP), 230 to 251 (NLRS…LTWT), 254 to 275 (SLHT…TFKC), and 278 to 299 (NLQK…TVNA). The N-linked (GlcNAc...) asparagine glycan is linked to N126. Residue N291 is glycosylated (N-linked (GlcNAc...) asparagine). The region spanning 311–362 (NMWECSRSICPLFYWLKNFKGNKESTMICAGPKHIQGEKVSDAVETYNICSD) is the LRRCT domain. A helical membrane pass occupies residues 425 to 445 (IIAGSVALFLSVAMILLVIYV). Topologically, residues 446-590 (SWKRYPASMK…PAIYLERITN (145 aa)) are cytoplasmic.

This sequence belongs to the LRRTM family. In terms of assembly, peripherally associated with AMPAR complex. AMPAR complex consists of an inner core made of 4 pore-forming GluA/GRIA proteins (GRIA1, GRIA2, GRIA3 and GRIA4) and 4 major auxiliary subunits arranged in a twofold symmetry. One of the two pairs of distinct binding sites is occupied either by CNIH2, CNIH3 or CACNG2, CACNG3. The other harbors CACNG2, CACNG3, CACNG4, CACNG8 or GSG1L. This inner core of AMPAR complex is complemented by outer core constituents binding directly to the GluA/GRIA proteins at sites distinct from the interaction sites of the inner core constituents. Outer core constituents include at least PRRT1, PRRT2, CKAMP44/SHISA9, FRRS1L and NRN1. The proteins of the inner and outer core serve as a platform for other, more peripherally associated AMPAR constituents, including LRRTM4. Alone or in combination, these auxiliary subunits control the gating and pharmacology of the AMPAR complex and profoundly impact their biogenesis and protein processing. As to expression, predominantly in the brain (at protein level). Also expressed in the cerebellum and other tissues.

Its subcellular location is the cell membrane. It is found in the postsynaptic cell membrane. In terms of biological role, may play a role in the development and maintenance of the vertebrate nervous system. Exhibits strong synaptogenic activity, restricted to excitatory presynaptic differentiation. The polypeptide is Leucine-rich repeat transmembrane neuronal protein 4 (Lrrtm4) (Mus musculus (Mouse)).